Reading from the N-terminus, the 712-residue chain is Polyribonucleotide nucleotidyltransferase (712 aa).

Mg(2+) is bound by residues Asp-487 and Asp-493. The KH domain occupies 554–613 (PKIITMTINPDKIRDVIGPSGKQINKIIEETGVKIDIEQDGTVFISSINQEMNDKAKKII). The region spanning 623–691 (GEIYEAKVKR…KQGRVNLSRK (69 aa)) is the S1 motif domain.

This sequence belongs to the polyribonucleotide nucleotidyltransferase family. The cofactor is Mg(2+).

Its subcellular location is the cytoplasm. The enzyme catalyses RNA(n+1) + phosphate = RNA(n) + a ribonucleoside 5'-diphosphate. Functionally, involved in mRNA degradation. Catalyzes the phosphorolysis of single-stranded polyribonucleotides processively in the 3'- to 5'-direction. In Bacillus cereus (strain ATCC 14579 / DSM 31 / CCUG 7414 / JCM 2152 / NBRC 15305 / NCIMB 9373 / NCTC 2599 / NRRL B-3711), this protein is Polyribonucleotide nucleotidyltransferase.